The primary structure comprises 137 residues: Large ribosomal subunit protein uL16 (137 aa).

Belongs to the universal ribosomal protein uL16 family. As to quaternary structure, part of the 50S ribosomal subunit.

Binds 23S rRNA and is also seen to make contacts with the A and possibly P site tRNAs. In Ruegeria sp. (strain TM1040) (Silicibacter sp.), this protein is Large ribosomal subunit protein uL16.